The following is a 149-amino-acid chain: MTEQRGVVEAFTDGACRGNPGPGGWGVLLRYGEHERELYGGEPETTNNRMELTAAIRALEALDRPCRVVLTTDSQYVRRGITEWLEGWKRRGWRTASRKPVLNQDLWQRLDELAAYHQVDWHWVRGHAGHAENERADALANQGIDELVA.

One can recognise an RNase H type-1 domain in the interval 4 to 145; sequence QRGVVEAFTD…ADALANQGID (142 aa). D13, E51, D73, and D137 together coordinate Mg(2+).

This sequence belongs to the RNase H family. In terms of assembly, monomer. It depends on Mg(2+) as a cofactor.

The protein resides in the cytoplasm. The catalysed reaction is Endonucleolytic cleavage to 5'-phosphomonoester.. Its function is as follows. Endonuclease that specifically degrades the RNA of RNA-DNA hybrids. This Halorhodospira halophila (strain DSM 244 / SL1) (Ectothiorhodospira halophila (strain DSM 244 / SL1)) protein is Ribonuclease H.